Consider the following 258-residue polypeptide: Acyl-[acyl-carrier-protein]--UDP-N-acetylglucosamine O-acyltransferase (258 aa).

The protein belongs to the transferase hexapeptide repeat family. LpxA subfamily. Homotrimer.

The protein localises to the cytoplasm. The catalysed reaction is a (3R)-hydroxyacyl-[ACP] + UDP-N-acetyl-alpha-D-glucosamine = a UDP-3-O-[(3R)-3-hydroxyacyl]-N-acetyl-alpha-D-glucosamine + holo-[ACP]. It participates in glycolipid biosynthesis; lipid IV(A) biosynthesis; lipid IV(A) from (3R)-3-hydroxytetradecanoyl-[acyl-carrier-protein] and UDP-N-acetyl-alpha-D-glucosamine: step 1/6. Its function is as follows. Involved in the biosynthesis of lipid A, a phosphorylated glycolipid that anchors the lipopolysaccharide to the outer membrane of the cell. This is Acyl-[acyl-carrier-protein]--UDP-N-acetylglucosamine O-acyltransferase from Myxococcus xanthus (strain DK1622).